We begin with the raw amino-acid sequence, 86 residues long: YcgL domain-containing protein XAC4085 (86 aa).

The region spanning 1 to 83 (MHAYVYKSQR…PKTIVLAGEC (83 aa)) is the YcgL domain.

The protein is YcgL domain-containing protein XAC4085 of Xanthomonas axonopodis pv. citri (strain 306).